A 362-amino-acid chain; its full sequence is GDSL esterase/lipase At5g18430 (362 aa).

A signal peptide spans 1-19; sequence MTISTVIAFMSMFLVFVMS. Catalysis depends on serine 35, which acts as the Nucleophile. An N-linked (GlcNAc...) asparagine glycan is attached at asparagine 117. Active-site residues include aspartate 327 and histidine 330. A glycan (N-linked (GlcNAc...) asparagine) is linked at asparagine 355.

The protein belongs to the 'GDSL' lipolytic enzyme family.

The protein resides in the secreted. In Arabidopsis thaliana (Mouse-ear cress), this protein is GDSL esterase/lipase At5g18430.